Consider the following 184-residue polypeptide: Cytidylate kinase (184 aa).

8 to 16 (GQPGSGKTT) lines the ATP pocket.

The protein belongs to the cytidylate kinase family. Type 2 subfamily.

Its subcellular location is the cytoplasm. It carries out the reaction CMP + ATP = CDP + ADP. The enzyme catalyses dCMP + ATP = dCDP + ADP. The polypeptide is Cytidylate kinase (Pyrobaculum aerophilum (strain ATCC 51768 / DSM 7523 / JCM 9630 / CIP 104966 / NBRC 100827 / IM2)).